The chain runs to 637 residues: 1-deoxy-D-xylulose-5-phosphate synthase (637 aa).

Residues H76 and 117-119 contribute to the thiamine diphosphate site; that span reads GHS. D148 is a binding site for Mg(2+). Residues 149 to 150, N177, Y294, and E381 each bind thiamine diphosphate; that span reads GA. Position 177 (N177) interacts with Mg(2+).

It belongs to the transketolase family. DXPS subfamily. In terms of assembly, homodimer. Mg(2+) serves as cofactor. It depends on thiamine diphosphate as a cofactor.

The catalysed reaction is D-glyceraldehyde 3-phosphate + pyruvate + H(+) = 1-deoxy-D-xylulose 5-phosphate + CO2. The protein operates within metabolic intermediate biosynthesis; 1-deoxy-D-xylulose 5-phosphate biosynthesis; 1-deoxy-D-xylulose 5-phosphate from D-glyceraldehyde 3-phosphate and pyruvate: step 1/1. Catalyzes the acyloin condensation reaction between C atoms 2 and 3 of pyruvate and glyceraldehyde 3-phosphate to yield 1-deoxy-D-xylulose-5-phosphate (DXP). This Neisseria gonorrhoeae (strain ATCC 700825 / FA 1090) protein is 1-deoxy-D-xylulose-5-phosphate synthase.